The following is a 391-amino-acid chain: tRNA-specific 2-thiouridylase MnmA (391 aa).

ATP is bound by residues 9 to 16 and methionine 35; that span reads GMSGGVDS. An interaction with target base in tRNA region spans residues 95-97; the sequence is NPD. Cysteine 100 acts as the Nucleophile in catalysis. A disulfide bond links cysteine 100 and cysteine 196. Glycine 124 lines the ATP pocket. The segment at 146–148 is interaction with tRNA; that stretch reads KDQ. Cysteine 196 functions as the Cysteine persulfide intermediate in the catalytic mechanism. Residues 308-309 form an interaction with tRNA region; that stretch reads RY.

Belongs to the MnmA/TRMU family.

The protein resides in the cytoplasm. It carries out the reaction S-sulfanyl-L-cysteinyl-[protein] + uridine(34) in tRNA + AH2 + ATP = 2-thiouridine(34) in tRNA + L-cysteinyl-[protein] + A + AMP + diphosphate + H(+). In terms of biological role, catalyzes the 2-thiolation of uridine at the wobble position (U34) of tRNA, leading to the formation of s(2)U34. The protein is tRNA-specific 2-thiouridylase MnmA of Burkholderia cenocepacia (strain HI2424).